Reading from the N-terminus, the 219-residue chain is Thymidylate kinase (219 aa).

ATP is bound at residue 7–14 (GIDGCGKT).

Belongs to the thymidylate kinase family.

It catalyses the reaction dTMP + ATP = dTDP + ADP. Functionally, phosphorylation of dTMP to form dTDP in both de novo and salvage pathways of dTTP synthesis. In Anaplasma phagocytophilum (strain HZ), this protein is Thymidylate kinase.